Here is a 69-residue protein sequence, read N- to C-terminus: Lantibiotic lichenicidin A2 (69 aa).

A propeptide spanning residues 1-37 (MKNSAAREAFKGANHPAGMVSEEELKALVGGNDVNPE) is cleaved from the precursor. Thr-38 bears the 2-oxobutanoic acid mark. (Z)-2,3-didehydrobutyrine occurs at positions 39, 42, and 43. Residues 44–48 (SSWTC) constitute a cross-link (lanthionine (Ser-Cys)). Ser-45 carries the 2,3-didehydroalanine (Ser) modification. 2 positions are modified to (Z)-2,3-didehydrobutyrine: Thr-50 and Thr-54. The lanthionine (Ser-Cys) cross-link spans 56–60 (SASLC). Cross-links (beta-methyllanthionine (Thr-Cys)) lie at residues 62–65 (TTKC) and 66–69 (TSRC). At Thr-63 the chain carries (Z)-2,3-didehydrobutyrine.

In terms of processing, maturation of lantibiotics involves the enzymatic conversion of Thr, and Ser into dehydrated AA and the formation of thioether bonds with cysteine. This is followed by membrane translocation and cleavage of the modified precursor.

Its subcellular location is the secreted. It localises to the cell wall. In terms of biological role, lanthionine-containing peptide antibiotic (lantibiotic) active on Gram-positive bacteria. The bactericidal activity of lantibiotics is based on depolarization of energized bacterial cytoplasmic membranes, initiated by the formation of aqueous transmembrane pores. When present individually, LchA2 exhibits activity towards L.lactis HP. When combined with LchA1, it displays activity towards a broad spectrum of non-pathogenic and pathogenic Gram-positive bacteria including strains of L.monocytogenes, methicillin-resistant S.aureus, S.pneumoniae and strains of vancomycin-resistant enterococci, but not towards E.faecium L4001 and BM4147-1. Combined LchA1 and LchA2 peptides also inhibit Bacillus sp. HIL-Y85/54728, L.lactis DPC3417 and B.halodurans C-125, which produce lantibiotics themselves. Inactivated by proteinase K and pronase E, but not by trypsin and chymotrypsin. This Bacillus licheniformis (strain ATCC 14580 / DSM 13 / JCM 2505 / CCUG 7422 / NBRC 12200 / NCIMB 9375 / NCTC 10341 / NRRL NRS-1264 / Gibson 46) protein is Lantibiotic lichenicidin A2.